A 277-amino-acid polypeptide reads, in one-letter code: MAKSGTKSLRILVTNDDGIHAPGLKVLEKIAHKLSRDVWVVAPEDEQSGSAHSLSLANPLRVRKLTARKYAVRGTPSDCVLMAVRHILKDEQPDLVVSGINRGQNIADDVTYSGTIAAAMEGTQLGIPSIALSQAFGFSGSANVKWSTAEHFAPDILKKLIAAGWPEEVLININFPDVVPGSVTGIEVTRQGKRDQSLVRVEERIDARNNPYYWLGFERILSNPPQGTDLRAIYESRISITPLHMDLTHQKTAKALNDALGTLAQPKRRPRSASRKK.

Aspartate 16, aspartate 17, serine 48, and asparagine 101 together coordinate a divalent metal cation.

This sequence belongs to the SurE nucleotidase family. A divalent metal cation is required as a cofactor.

Its subcellular location is the cytoplasm. The catalysed reaction is a ribonucleoside 5'-phosphate + H2O = a ribonucleoside + phosphate. In terms of biological role, nucleotidase that shows phosphatase activity on nucleoside 5'-monophosphates. The sequence is that of 5'-nucleotidase SurE from Parvibaculum lavamentivorans (strain DS-1 / DSM 13023 / NCIMB 13966).